A 466-amino-acid polypeptide reads, in one-letter code: 3-isopropylmalate dehydratase large subunit (466 aa).

[4Fe-4S] cluster-binding residues include Cys-347, Cys-407, and Cys-410.

It belongs to the aconitase/IPM isomerase family. LeuC type 1 subfamily. Heterodimer of LeuC and LeuD. It depends on [4Fe-4S] cluster as a cofactor.

The catalysed reaction is (2R,3S)-3-isopropylmalate = (2S)-2-isopropylmalate. Its pathway is amino-acid biosynthesis; L-leucine biosynthesis; L-leucine from 3-methyl-2-oxobutanoate: step 2/4. Its function is as follows. Catalyzes the isomerization between 2-isopropylmalate and 3-isopropylmalate, via the formation of 2-isopropylmaleate. The protein is 3-isopropylmalate dehydratase large subunit of Escherichia coli O139:H28 (strain E24377A / ETEC).